Reading from the N-terminus, the 107-residue chain is Chlorobenzene dioxygenase, ferredoxin component (107 aa).

In terms of domain architecture, Rieske spans 4–99 (TYIMRQSDLP…IKVEGGDVHV (96 aa)). Positions 43, 45, 62, and 65 each coordinate [2Fe-2S] cluster.

Belongs to the bacterial ring-hydroxylating dioxygenase ferredoxin component family. This dioxygenase system consists of four proteins: the two subunits of the oxygenase component (TecA1 and TecA2), a ferredoxin (TecA3) and a ferredoxin reductase (TecA4). Requires [2Fe-2S] cluster as cofactor.

Its pathway is aromatic compound metabolism. Its function is as follows. Part of the chlorobenzene dioxygenase system that catalyzes the dihydroxylation of a range of aromatic compounds, including chlorinated benzenes and toluenes, and dinuclear aromatics such as biphenyl and dibenzo-p-dioxin. This is Chlorobenzene dioxygenase, ferredoxin component from Cupriavidus sp. (strain PS12).